A 3118-amino-acid polypeptide reads, in one-letter code: Laminin subunit alpha-2 (3118 aa).

Residues Met1–Gly19 form the signal peptide. In terms of domain architecture, Laminin N-terminal spans Gln31–Met282. N-linked (GlcNAc...) asparagine glycosylation is found at Asn51 and Asn85. Disulfide bonds link Cys283-Cys292, Cys285-Cys303, Cys305-Cys314, Cys317-Cys337, Cys340-Cys349, and Cys342-Cys374. 4 consecutive Laminin EGF-like domains span residues Cys283–Ala339, Cys340–Pro409, Cys410–Pro464, and Cys465–Glu513. Residue Asn299 is glycosylated (N-linked (GlcNAc...) asparagine). Residues Asn359 and Asn376 are each glycosylated (N-linked (GlcNAc...) asparagine). 10 disulfides stabilise this stretch: Cys377/Cys386, Cys389/Cys407, Cys410/Cys422, Cys412/Cys438, Cys440/Cys449, Cys452/Cys462, Cys465/Cys478, Cys467/Cys482, Cys484/Cys493, and Cys496/Cys511. The N-linked (GlcNAc...) asparagine glycan is linked to Asn466. The Laminin EGF-like 5; first part domain occupies Cys514–Cys523. In terms of domain architecture, Laminin IV type A 1 spans Tyr527 to Val719. The Laminin EGF-like 5; second part domain occupies Cys720–Pro752. An N-linked (GlcNAc...) asparagine glycan is attached at Asn742. Intrachain disulfides connect Cys753/Cys762, Cys755/Cys769, Cys772/Cys781, Cys784/Cys800, Cys803/Cys818, Cys805/Cys828, Cys831/Cys840, Cys843/Cys858, Cys861/Cys875, Cys863/Cys882, Cys885/Cys894, Cys897/Cys911, Cys914/Cys926, Cys916/Cys933, Cys935/Cys944, Cys947/Cys960, Cys963/Cys975, Cys965/Cys981, Cys983/Cys992, Cys995/Cys1007, Cys1010/Cys1019, Cys1012/Cys1026, Cys1028/Cys1037, Cys1040/Cys1053, Cys1056/Cys1068, Cys1058/Cys1075, Cys1077/Cys1086, Cys1089/Cys1099, Cys1102/Cys1114, Cys1104/Cys1130, Cys1132/Cys1141, and Cys1144/Cys1159. 8 consecutive Laminin EGF-like domains span residues Cys753–Pro802, Cys803–Pro860, Cys861–Pro913, Cys914–Pro962, Cys963–Ala1009, Cys1010–Val1055, Cys1056–Leu1101, and Cys1102–Ser1161. Asn919 carries N-linked (GlcNAc...) asparagine glycosylation. The N-linked (GlcNAc...) asparagine glycan is linked to Asn1031. Asn1057 is a glycosylation site (N-linked (GlcNAc...) asparagine). In terms of domain architecture, Laminin EGF-like 14; first part spans Cys1162–Cys1171. In terms of domain architecture, Laminin IV type A 2 spans Ser1172 to Arg1375. The 40-residue stretch at Cys1376–Pro1415 folds into the Laminin EGF-like 14; second part domain. Intrachain disulfides connect Cys1378–Cys1387, Cys1416–Cys1425, Cys1418–Cys1432, Cys1435–Cys1444, Cys1447–Cys1462, Cys1465–Cys1480, Cys1467–Cys1490, Cys1493–Cys1502, Cys1505–Cys1520, Cys1523–Cys1535, Cys1525–Cys1542, Cys1544–Cys1553, and Cys1556–Cys1567. Laminin EGF-like domains follow at residues Cys1416–Pro1464, Cys1465–Glu1522, and Cys1523–Phe1569. The interval Cys1570–Ile2140 is domain II and I. N-linked (GlcNAc...) asparagine glycosylation is found at Asn1593, Asn1610, Asn1696, Asn1806, Asn1897, Asn1912, Asn1916, Asn2013, Asn2024, Asn2041, Asn2122, and Asn2236. The stretch at Gln1662–Ser1863 forms a coiled coil. Residues Ala1923–Ser2146 are a coiled coil. 5 consecutive Laminin G-like domains span residues Lys2141–Cys2324, Thr2336–Cys2517, Val2522–Cys2706, Ser2759–Cys2930, and Thr2929–Cys3115. A disulfide bridge connects residues Cys2298 and Cys2324. Asn2356, Asn2431, and Asn2474 each carry an N-linked (GlcNAc...) asparagine glycan. A disulfide bridge links Cys2491 with Cys2517. N-linked (GlcNAc...) asparagine glycans are attached at residues Asn2547, Asn2554, and Asn2644. Residues Cys2679 and Cys2706 are joined by a disulfide bond. Residue Asn2889 is glycosylated (N-linked (GlcNAc...) asparagine). 2 cysteine pairs are disulfide-bonded: Cys2905–Cys2930 and Cys3083–Cys3115.

In terms of assembly, laminin is a complex glycoprotein, consisting of three different polypeptide chains (alpha, beta, gamma), which are bound to each other by disulfide bonds into a cross-shaped molecule comprising one long and three short arms with globules at each end. Alpha-2 is a subunit of laminin-2 (laminin-211 or merosin), laminin-4 (laminin-221 or S-merosin) and laminin-12 (laminin-213). Interacts with FBLN1, FBLN2 and NID2.

Its subcellular location is the secreted. The protein localises to the extracellular space. The protein resides in the extracellular matrix. It is found in the basement membrane. Functionally, binding to cells via a high affinity receptor, laminin is thought to mediate the attachment, migration and organization of cells into tissues during embryonic development by interacting with other extracellular matrix components. This chain is Laminin subunit alpha-2 (Lama2), found in Mus musculus (Mouse).